The following is a 157-amino-acid chain: 2-C-methyl-D-erythritol 2,4-cyclodiphosphate synthase (157 aa).

The a divalent metal cation site is built by Asp-8 and His-10. Residues 8 to 10 and 34 to 35 each bind 4-CDP-2-C-methyl-D-erythritol 2-phosphate; these read DVH and HS. His-42 is an a divalent metal cation binding site. 4-CDP-2-C-methyl-D-erythritol 2-phosphate-binding positions include 56–58, 132–135, and Arg-142; these read DIG and TTNE.

The protein belongs to the IspF family. As to quaternary structure, homotrimer. It depends on a divalent metal cation as a cofactor.

The enzyme catalyses 4-CDP-2-C-methyl-D-erythritol 2-phosphate = 2-C-methyl-D-erythritol 2,4-cyclic diphosphate + CMP. It participates in isoprenoid biosynthesis; isopentenyl diphosphate biosynthesis via DXP pathway; isopentenyl diphosphate from 1-deoxy-D-xylulose 5-phosphate: step 4/6. Involved in the biosynthesis of isopentenyl diphosphate (IPP) and dimethylallyl diphosphate (DMAPP), two major building blocks of isoprenoid compounds. Catalyzes the conversion of 4-diphosphocytidyl-2-C-methyl-D-erythritol 2-phosphate (CDP-ME2P) to 2-C-methyl-D-erythritol 2,4-cyclodiphosphate (ME-CPP) with a corresponding release of cytidine 5-monophosphate (CMP). The polypeptide is 2-C-methyl-D-erythritol 2,4-cyclodiphosphate synthase (Prosthecochloris aestuarii (strain DSM 271 / SK 413)).